The chain runs to 1389 residues: uncharacterized protein (1389 aa).

A coiled-coil region spans residues 43 to 94; the sequence is STIAQRVSQLENEVAEINVALAEHVNELNSQEKRIDKLEKTVKKKKSNCSDD. Residues 294 to 353 form a disordered region; that stretch reads HKNRRSKSDNSDLSEYSSSNSDDSECTDSDGSSCSTDGSPDCTESENTESHRSHGKKKHR. Low complexity-rich tracts occupy residues 304-314 and 322-335; these read SDLSEYSSSNS and SDGS…SPDC. 3 WD repeats span residues 867–907, 1017–1056, and 1115–1156; these read TFTD…VKHI, GYNE…TPSG, and GISN…ILST.

It localises to the virion. This is an uncharacterized protein from Acanthamoeba polyphaga (Amoeba).